A 633-amino-acid chain; its full sequence is Probable methyltransferase PMT17 (633 aa).

At 1 to 18 the chain is on the cytoplasmic side; that stretch reads MAKENSGHHHQTEARRKK. Residues 19–39 form a helical; Signal-anchor for type II membrane protein membrane-spanning segment; that stretch reads LTLILGVSGLCILFYVLGAWQ. Residues 40–633 lie on the Lumenal side of the membrane; that stretch reads ANTVPSSISK…NNNNNNNNNN (594 aa). Residues 50–71 form a disordered region; the sequence is LGCETQSNPSSSSSSSSSSESA. Residues 59 to 70 are compositionally biased toward low complexity; sequence SSSSSSSSSSES. Asn-87 carries an N-linked (GlcNAc...) asparagine glycan.

The protein belongs to the methyltransferase superfamily.

Its subcellular location is the endoplasmic reticulum membrane. This is Probable methyltransferase PMT17 from Arabidopsis thaliana (Mouse-ear cress).